The sequence spans 67 residues: Conotoxin Cl6.10 (67 aa).

The N-terminal stretch at 1–24 (MKLTCVLIAAVLLLAVCQLDSADA) is a signal peptide. Residues 25–37 (TAYMRKDPSLRSP) constitute a propeptide that is removed on maturation. 3 cysteine pairs are disulfide-bonded: cysteine 43-cysteine 57, cysteine 50-cysteine 61, and cysteine 56-cysteine 65.

The protein belongs to the conotoxin O1 superfamily. As to expression, expressed by the venom duct.

It is found in the secreted. The polypeptide is Conotoxin Cl6.10 (Californiconus californicus (California cone)).